A 355-amino-acid polypeptide reads, in one-letter code: UDP-N-acetylglucosamine--N-acetylmuramyl-(pentapeptide) pyrophosphoryl-undecaprenol N-acetylglucosamine transferase (355 aa).

3 residues coordinate UDP-N-acetyl-alpha-D-glucosamine: Arg166, Ser196, and Gln290.

The protein belongs to the glycosyltransferase 28 family. MurG subfamily.

It localises to the cell membrane. The catalysed reaction is Mur2Ac(oyl-L-Ala-gamma-D-Glu-L-Lys-D-Ala-D-Ala)-di-trans,octa-cis-undecaprenyl diphosphate + UDP-N-acetyl-alpha-D-glucosamine = beta-D-GlcNAc-(1-&gt;4)-Mur2Ac(oyl-L-Ala-gamma-D-Glu-L-Lys-D-Ala-D-Ala)-di-trans,octa-cis-undecaprenyl diphosphate + UDP + H(+). The protein operates within cell wall biogenesis; peptidoglycan biosynthesis. In terms of biological role, cell wall formation. Catalyzes the transfer of a GlcNAc subunit on undecaprenyl-pyrophosphoryl-MurNAc-pentapeptide (lipid intermediate I) to form undecaprenyl-pyrophosphoryl-MurNAc-(pentapeptide)GlcNAc (lipid intermediate II). This is UDP-N-acetylglucosamine--N-acetylmuramyl-(pentapeptide) pyrophosphoryl-undecaprenol N-acetylglucosamine transferase from Staphylococcus haemolyticus (strain JCSC1435).